We begin with the raw amino-acid sequence, 788 residues long: Protein translocase subunit SecA 2 (788 aa).

ATP contacts are provided by residues Q77, 95 to 99 (GEGKT), and D491.

The protein belongs to the SecA family. In terms of assembly, monomer and homodimer. Part of the essential Sec protein translocation apparatus which comprises SecA, SecYEG and auxiliary proteins SecDF. Other proteins may also be involved.

Its subcellular location is the cell membrane. It localises to the cytoplasm. It catalyses the reaction ATP + H2O + cellular proteinSide 1 = ADP + phosphate + cellular proteinSide 2.. Its function is as follows. Part of the Sec protein translocase complex. Interacts with the SecYEG preprotein conducting channel. Has a central role in coupling the hydrolysis of ATP to the transfer of proteins into and across the cell membrane, serving as an ATP-driven molecular motor driving the stepwise translocation of polypeptide chains across the membrane. This is Protein translocase subunit SecA 2 from Lactobacillus johnsonii (strain CNCM I-12250 / La1 / NCC 533).